A 332-amino-acid chain; its full sequence is Formamidase (332 aa).

Positions phenylalanine 14–proline 259 constitute a CN hydrolase domain. Glutamate 60 acts as the Proton acceptor in catalysis. Catalysis depends on lysine 132, which acts as the Proton donor. Cysteine 165 serves as the catalytic Nucleophile.

This sequence belongs to the carbon-nitrogen hydrolase superfamily. Aliphatic amidase family.

It carries out the reaction formamide + H2O = formate + NH4(+). Functionally, is an aliphatic amidase with a restricted substrate specificity, as it only hydrolyzes formamide. The chain is Formamidase from Bacillus cereus (strain ZK / E33L).